The following is a 180-amino-acid chain: Bifunctional protein PyrR (180 aa).

The short motif at 101 to 113 is the PRPP-binding element; that stretch reads LIVVDDVLFTGRT.

The protein belongs to the purine/pyrimidine phosphoribosyltransferase family. PyrR subfamily. As to quaternary structure, homodimer and homohexamer; in equilibrium.

It carries out the reaction UMP + diphosphate = 5-phospho-alpha-D-ribose 1-diphosphate + uracil. Regulates transcriptional attenuation of the pyrimidine nucleotide (pyr) operon by binding in a uridine-dependent manner to specific sites on pyr mRNA. This disrupts an antiterminator hairpin in the RNA and favors formation of a downstream transcription terminator, leading to a reduced expression of downstream genes. Its function is as follows. Also displays a weak uracil phosphoribosyltransferase activity which is not physiologically significant. This is Bifunctional protein PyrR from Bacillus pumilus (strain SAFR-032).